The following is a 146-amino-acid chain: MVKKVLLINGPNLNLLGTREPEKYGTTSLSDIEQAAIEQAKLKKNDSEVLTFQSNTEGFIIDRIHEAKRQGVGFVVINAGAYTHTSVGIRDALLGTAIPFIEVHITNVHQREPFRHQSYLSDKAVAVICGLGVYGYTAAIEYALNY.

Catalysis depends on Y24, which acts as the Proton acceptor. Substrate is bound by residues N78, H84, and D91. H104 acts as the Proton donor in catalysis. Residues 105-106 (IT) and R115 contribute to the substrate site.

It belongs to the type-II 3-dehydroquinase family. As to quaternary structure, homododecamer. Adopts a ring-like structure, composed of an arrangement of two hexameric rings stacked on top of one another.

The catalysed reaction is 3-dehydroquinate = 3-dehydroshikimate + H2O. It participates in aromatic compound metabolism; 3,4-dihydroxybenzoate biosynthesis; 3,4-dihydroxybenzoate from 3-dehydroquinate: step 1/2. In terms of biological role, is involved in the catabolism of quinate. Allows the utilization of quinate as carbon source via the beta-ketoadipate pathway. This Candida dubliniensis (strain CD36 / ATCC MYA-646 / CBS 7987 / NCPF 3949 / NRRL Y-17841) (Yeast) protein is Catabolic 3-dehydroquinase.